The chain runs to 221 residues: Probable molybdenum cofactor guanylyltransferase (221 aa).

GTP contacts are provided by residues 17-19 (LAG), K29, D74, and D103. D103 contacts Mg(2+).

Belongs to the MobA family. Mg(2+) serves as cofactor.

The protein localises to the cytoplasm. The enzyme catalyses Mo-molybdopterin + GTP + H(+) = Mo-molybdopterin guanine dinucleotide + diphosphate. In terms of biological role, transfers a GMP moiety from GTP to Mo-molybdopterin (Mo-MPT) cofactor (Moco or molybdenum cofactor) to form Mo-molybdopterin guanine dinucleotide (Mo-MGD) cofactor. This chain is Probable molybdenum cofactor guanylyltransferase, found in Peptoclostridium acidaminophilum (Eubacterium acidaminophilum).